A 1177-amino-acid polypeptide reads, in one-letter code: DNA-directed RNA polymerase subunit beta' (1177 aa).

Cys60, Cys62, Cys75, and Cys78 together coordinate Zn(2+). Positions 450, 452, and 454 each coordinate Mg(2+). Zn(2+) is bound by residues Cys795, Cys869, Cys876, and Cys879.

This sequence belongs to the RNA polymerase beta' chain family. In terms of assembly, the RNAP catalytic core consists of 2 alpha, 1 beta, 1 beta' and 1 omega subunit. When a sigma factor is associated with the core the holoenzyme is formed, which can initiate transcription. Mg(2+) is required as a cofactor. Zn(2+) serves as cofactor.

The enzyme catalyses RNA(n) + a ribonucleoside 5'-triphosphate = RNA(n+1) + diphosphate. Functionally, DNA-dependent RNA polymerase catalyzes the transcription of DNA into RNA using the four ribonucleoside triphosphates as substrates. This Clostridium botulinum (strain Eklund 17B / Type B) protein is DNA-directed RNA polymerase subunit beta'.